We begin with the raw amino-acid sequence, 120 residues long: Large ribosomal subunit protein uL18 (120 aa).

It belongs to the universal ribosomal protein uL18 family. As to quaternary structure, part of the 50S ribosomal subunit; part of the 5S rRNA/L5/L18/L25 subcomplex. Contacts the 5S and 23S rRNAs.

Functionally, this is one of the proteins that bind and probably mediate the attachment of the 5S RNA into the large ribosomal subunit, where it forms part of the central protuberance. This is Large ribosomal subunit protein uL18 from Azorhizobium caulinodans (strain ATCC 43989 / DSM 5975 / JCM 20966 / LMG 6465 / NBRC 14845 / NCIMB 13405 / ORS 571).